Here is a 436-residue protein sequence, read N- to C-terminus: Adenylosuccinate synthetase (436 aa).

GTP is bound by residues 12–18 (GDEGKGK) and 40–42 (GHT). Asp-13 serves as the catalytic Proton acceptor. Positions 13 and 40 each coordinate Mg(2+). Residues 13–16 (DEGK), 38–41 (NAGH), Thr-128, Arg-142, Gln-223, Thr-238, and Arg-302 each bind IMP. Catalysis depends on His-41, which acts as the Proton donor. Residue 298-304 (TTTGRRR) coordinates substrate. GTP is bound by residues Arg-304, 330–332 (KLD), and 412–414 (SLG).

The protein belongs to the adenylosuccinate synthetase family. As to quaternary structure, homodimer. Mg(2+) is required as a cofactor.

It localises to the cytoplasm. It carries out the reaction IMP + L-aspartate + GTP = N(6)-(1,2-dicarboxyethyl)-AMP + GDP + phosphate + 2 H(+). It participates in purine metabolism; AMP biosynthesis via de novo pathway; AMP from IMP: step 1/2. In terms of biological role, plays an important role in the de novo pathway of purine nucleotide biosynthesis. Catalyzes the first committed step in the biosynthesis of AMP from IMP. The sequence is that of Adenylosuccinate synthetase from Prochlorococcus marinus (strain MIT 9515).